Reading from the N-terminus, the 58-residue chain is GCKARGDTCQKDCDCCGCFYKCHCPLDWFGGKWHPLGCSCVYGDKYICEKKKKECPNV.

6 cysteine pairs are disulfide-bonded: cysteine 2–cysteine 16, cysteine 9–cysteine 22, cysteine 13–cysteine 48, cysteine 15–cysteine 40, cysteine 18–cysteine 55, and cysteine 24–cysteine 38.

Expressed by the venom gland.

It is found in the secreted. Its function is as follows. Probable neurotoxin. This chain is U7-ctenitoxin-Pr1a, found in Phoneutria reidyi (Brazilian Amazonian armed spider).